The sequence spans 375 residues: Adiponectin receptor protein 1 (375 aa).

Positions 1–60 (MSSHKGSAGAQGNGAPSGNREADTVELAELGPLLEEKGKRAASSPAKAEEDQACPVPQEE) are disordered. The Cytoplasmic portion of the chain corresponds to 1-136 (MSSHKGSAGA…SIFRIHTETG (136 aa)). The helical transmembrane segment at 137–157 (NIWTHLLGFVLFLFLGILTML) threads the bilayer. Residues 158 to 170 (RPNMYFMAPLQEK) lie on the Extracellular side of the membrane. Residues 171-191 (VVFGMFFLGAVLCLSFSWLFH) traverse the membrane as a helical segment. His191 lines the Zn(2+) pocket. Residues 192–203 (TVYCHSEKVSRT) are Cytoplasmic-facing. The helical transmembrane segment at 204 to 224 (FSKLDYSGIALLIMGSFVPWL) threads the bilayer. The Extracellular segment spans residues 225-234 (YYSFYCSPQP). The helical transmembrane segment at 235–255 (RLIYLSIVCVLGISAIIVAQW) threads the bilayer. Topologically, residues 256–264 (DRFATPKHR) are cytoplasmic. A helical transmembrane segment spans residues 265–285 (QTRAGVFLGLGLSGVVPTMHF). At 286 to 298 (TIAEGFVKATTVG) the chain is on the extracellular side. The chain crosses the membrane as a helical span at residues 299-319 (QMGWFFLMAVMYITGAGLYAA). Residues 320-337 (RIPERFFPGKFDIWFQSH) lie on the Cytoplasmic side of the membrane. Zn(2+) is bound by residues His337 and His341. A helical transmembrane segment spans residues 338-358 (QIFHVLVVAAAFVHFYGVSNL). At 359–375 (QEFRYGLEGGCTDDSLL) the chain is on the extracellular side.

It belongs to the ADIPOR family. As to quaternary structure, may form homooligomers and heterooligomers with ADIPOR2. Interacts with APPL2 (via BAR domain); hinders the accessibility of APPL1 to ADIPOR1; negatively regulates adiponectin signaling; ADIPOQ dissociates this interaction and facilitates the recruitment of APPL1 to ADIPOR1. Interacts with APPL1; ADIPOQ enhances this interaction; inhibites adiponectin-stimulated binding of APPL2 to ADIPOR1. Detected in brain and quadriceps muscle (at protein level). Widely expressed. Expressed in heart, kidney, liver, lung, skeletal muscle, white adipose tissue, brown adipose tissue, aorta and spleen. Weakly expressed in brain and testis.

The protein resides in the cell membrane. Receptor for ADIPOQ, an essential hormone secreted by adipocytes that regulates glucose and lipid metabolism. Required for normal glucose and fat homeostasis and for maintaining a normal body weight. ADIPOQ-binding activates a signaling cascade that leads to increased AMPK activity, and ultimately to increased fatty acid oxidation, increased glucose uptake and decreased gluconeogenesis. Has high affinity for globular adiponectin and low affinity for full-length adiponectin. This Mus musculus (Mouse) protein is Adiponectin receptor protein 1.